The following is an 88-amino-acid chain: UPF0297 protein SPCG_0205 (88 aa).

Belongs to the UPF0297 family.

This chain is UPF0297 protein SPCG_0205, found in Streptococcus pneumoniae (strain CGSP14).